Here is a 541-residue protein sequence, read N- to C-terminus: MSNNNFKDDFEKNRQSIDPKEHQENTQDSVNDSVDNIKEEVSDKSDEQFPPRNAQRRQRRRDTATNQREDEQSNQEHHNENNEVGDRDNGLQHEDNSSRDSNADKESNDPSQNNNLIHESSNNQQSENRHDINNEKDQSDKDSNNKKGAVIASSGAAGVGAYAASKHNDAASSSKDHNDKAHQQNQDWEQSNQTNDSTETQDENTNNHDSKKKGAAVAGGAAAAGAGAYAAGKHKGKKDKNDNEPEQNESKSDVKNEEKHGSKKKGAAVAGGAAAAGTGAAAASHSKSSTGNGGNGNGGNGGNGNNGDNNHDSEDNNKKKGGLLGKLLPIIAAILILAAIGIFGGMALTGNNDDKGSDDDKKVADNKDKDSDKAKDADSDKDSKSDKDKDKAKDDDNNQATTDSDSSDSSDNANSDSDQGNNDSQDQANSDQNQGTQDEQNSQNNQDQQSDQSQQNGQANSNQNGSSDQSQNASNDSNQQNNQSSNSNSGQRTHVVNGQNLYRIAIQYYGEGTPENVEKIREANNIQGNDIHNGQRLVIPQ.

Basic and acidic residues-rich tracts occupy residues 1–25 (MSNNNFKDDFEKNRQSIDPKEHQEN), 35–49 (DNIKEEVSDKSDEQF), and 61–108 (RDTA…KESN). 2 disordered regions span residues 1–322 (MSNN…KKGG) and 346–493 (MALT…GQRT). A compositionally biased stretch (polar residues) spans 109 to 126 (DPSQNNNLIHESSNNQQS). The span at 127–145 (ENRHDINNEKDQSDKDSNN) shows a compositional bias: basic and acidic residues. The segment covering 146-165 (KKGAVIASSGAAGVGAYAAS) has biased composition (low complexity). The segment covering 166-182 (KHNDAASSSKDHNDKAH) has biased composition (basic and acidic residues). The span at 183-198 (QQNQDWEQSNQTNDST) shows a compositional bias: polar residues. Over residues 215 to 231 (AAVAGGAAAAGAGAYAA) the composition is skewed to low complexity. The segment covering 239-260 (DKNDNEPEQNESKSDVKNEEKH) has biased composition (basic and acidic residues). A compositionally biased stretch (low complexity) spans 267–290 (AAVAGGAAAAGTGAAAASHSKSST). The span at 291–305 (GNGGNGNGGNGGNGN) shows a compositional bias: gly residues. Basic and acidic residues predominate over residues 309–318 (NNHDSEDNNK). The chain crosses the membrane as a helical span at residues 327 to 347 (LLPIIAAILILAAIGIFGGMA). Residues 352 to 396 (NDDKGSDDDKKVADNKDKDSDKAKDADSDKDSKSDKDKDKAKDDD) are compositionally biased toward basic and acidic residues. The segment covering 398 to 491 (NQATTDSDSS…NQSSNSNSGQ (94 aa)) has biased composition (low complexity). Residues 491 to 539 (QRTHVVNGQNLYRIAIQYYGEGTPENVEKIREANNIQGNDIHNGQRLVI) form the LysM domain.

The protein localises to the cell membrane. In Staphylococcus saprophyticus subsp. saprophyticus (strain ATCC 15305 / DSM 20229 / NCIMB 8711 / NCTC 7292 / S-41), this protein is Probable elastin-binding protein EbpS (ebpS).